The chain runs to 515 residues: Galactose-1-phosphate uridylyltransferase (515 aa).

Belongs to the galactose-1-phosphate uridylyltransferase type 2 family.

The protein localises to the cytoplasm. The enzyme catalyses alpha-D-galactose 1-phosphate + UDP-alpha-D-glucose = alpha-D-glucose 1-phosphate + UDP-alpha-D-galactose. Its pathway is carbohydrate metabolism; galactose metabolism. Its function is as follows. Transfers the UMP unit from UDP-glucose (UDP-Glc) to Gal1P. Can also transfer the UMP unit to GlcNAc1P and GalNAc1P. Involved in the general galactose metabolism, and also involved in the lacto-N-biose I/galacto-N-biose (LNB/GNB) degradation pathway, which is important for host intestinal colonization by bifidobacteria. The polypeptide is Galactose-1-phosphate uridylyltransferase (Bifidobacterium longum subsp. longum (strain ATCC 15707 / DSM 20219 / JCM 1217 / NCTC 11818 / E194b)).